A 146-amino-acid polypeptide reads, in one-letter code: Large ribosomal subunit protein uL15 (146 aa).

The span at 1 to 13 shows a compositional bias: basic and acidic residues; it reads MKLHELKAAEGSR. The segment at 1–56 is disordered; sequence MKLHELKAAEGSRRVRNRVGRGAGSGNGKTSGRGQKGQKARSGGGVRPGFEGGQLP. Gly residues-rich tracts occupy residues 21–35 and 42–52; these read RGAGSGNGKTSGRGQ and SGGGVRPGFEG.

Belongs to the universal ribosomal protein uL15 family. As to quaternary structure, part of the 50S ribosomal subunit.

In terms of biological role, binds to the 23S rRNA. The sequence is that of Large ribosomal subunit protein uL15 from Staphylococcus haemolyticus (strain JCSC1435).